The primary structure comprises 607 residues: Elongation factor 4 (607 aa).

One can recognise a tr-type G domain in the interval 11–193; the sequence is GKIRNFSIIA…QIVEKVPAPT (183 aa). GTP-binding positions include 23–28 and 140–143; these read DHGKST and NKID.

The protein belongs to the TRAFAC class translation factor GTPase superfamily. Classic translation factor GTPase family. LepA subfamily.

The protein resides in the cell membrane. It catalyses the reaction GTP + H2O = GDP + phosphate + H(+). Required for accurate and efficient protein synthesis under certain stress conditions. May act as a fidelity factor of the translation reaction, by catalyzing a one-codon backward translocation of tRNAs on improperly translocated ribosomes. Back-translocation proceeds from a post-translocation (POST) complex to a pre-translocation (PRE) complex, thus giving elongation factor G a second chance to translocate the tRNAs correctly. Binds to ribosomes in a GTP-dependent manner. The sequence is that of Elongation factor 4 from Streptococcus pneumoniae (strain Taiwan19F-14).